The sequence spans 67 residues: MTDLEELKQRVQKLQSRAATAKTQLHDLAECLPNYWTEIVAVAEKTFDAFAQLDAAKRELAASENSR.

The protein belongs to the UPF0437 family.

This Sinorhizobium fredii (strain NBRC 101917 / NGR234) protein is UPF0437 protein y4xE.